A 985-amino-acid chain; its full sequence is Lateral signaling target protein 2 homolog (985 aa).

Disordered regions lie at residues 310 to 453, 498 to 520, 533 to 640, and 747 to 892; these read PLGS…ETDE, EYGA…PSTS, LRLP…SSLS, and DNVF…TTTA. Composition is skewed to low complexity over residues 327–348, 384–393, and 401–422; these read HPTT…TNTH, SLSPNSTPTA, and PSHS…PADW. The segment covering 423–453 has biased composition (acidic residues); sequence SDGDDEDEEDDDDDIEVEEEELDSTDDETDE. Serine 537 and serine 538 each carry phosphoserine. Composition is skewed to basic residues over residues 563-589 and 596-607; these read VYRH…HHQH and HPHRTTRSGRKR. Composition is skewed to low complexity over residues 629-640 and 761-770; these read ASGDTSAASSLS and NGNQANASAQ. Over residues 776–785 the composition is skewed to polar residues; the sequence is GSIQRNNTVD. Serine 808 bears the Phosphoserine mark. Low complexity predominate over residues 812-866; that stretch reads QESASTSTSSSQLHQEQQQLQIQVQRQRNNSVGSNTPSSASSTSSSSEQNSPVSA. Over residues 875 to 885 the composition is skewed to polar residues; the sequence is QSNNETQMPSS. The segment at 904–964 adopts an FYVE-type zinc-finger fold; that stretch reads DGKAPRCMSC…VCRECYVREV (61 aa). Zn(2+)-binding residues include cysteine 910, cysteine 913, cysteine 926, cysteine 929, cysteine 934, cysteine 937, cysteine 956, and cysteine 959.

This sequence belongs to the lst-2 family.

Its function is as follows. Negative regulator of epidermal growth factor receptor (EGFR) signaling. This chain is Lateral signaling target protein 2 homolog, found in Drosophila ananassae (Fruit fly).